Here is a 487-residue protein sequence, read N- to C-terminus: Kynureninase 1 (487 aa).

Residues L147, T148, 175–178 (FPSD), S232, D261, H264, and Y286 contribute to the pyridoxal 5'-phosphate site. K287 bears the N6-(pyridoxal phosphate)lysine mark. The pyridoxal 5'-phosphate site is built by W327 and N355.

It belongs to the kynureninase family. In terms of assembly, homodimer. Pyridoxal 5'-phosphate is required as a cofactor.

It is found in the cytoplasm. The catalysed reaction is L-kynurenine + H2O = anthranilate + L-alanine + H(+). It carries out the reaction 3-hydroxy-L-kynurenine + H2O = 3-hydroxyanthranilate + L-alanine + H(+). Its pathway is amino-acid degradation; L-kynurenine degradation; L-alanine and anthranilate from L-kynurenine: step 1/1. The protein operates within cofactor biosynthesis; NAD(+) biosynthesis; quinolinate from L-kynurenine: step 2/3. In terms of biological role, catalyzes the cleavage of L-kynurenine (L-Kyn) and L-3-hydroxykynurenine (L-3OHKyn) into anthranilic acid (AA) and 3-hydroxyanthranilic acid (3-OHAA), respectively. This is Kynureninase 1 (bna5-1) from Aspergillus oryzae (strain ATCC 42149 / RIB 40) (Yellow koji mold).